The primary structure comprises 404 residues: Demethylphylloquinone reductase NdbB (404 aa).

An FAD-binding site is contributed by arginine 7 to arginine 43. Position 159–195 (isoleucine 159–glutamate 195) interacts with NADP(+).

The protein belongs to the NADH dehydrogenase family. It depends on FAD as a cofactor.

It catalyses the reaction demethylphylloquinone + NADPH + H(+) = demethylphylloquinol + NADP(+). The protein operates within cofactor biosynthesis; phylloquinone biosynthesis. Inhibited by dicumarol. Its function is as follows. Bifunctional oxidoreductase probably ables to act both on prenyl naphthoquinones and on prenyl benzoquinones. Catalyzes the penultimate step in the biosynthesis of vitamin K1. The chain is Demethylphylloquinone reductase NdbB from Synechocystis sp. (strain ATCC 27184 / PCC 6803 / Kazusa).